A 381-amino-acid polypeptide reads, in one-letter code: Cytochrome b (381 aa).

The next 4 helical transmembrane spans lie at 34–54 (FGSL…FLAM), 78–99 (WLIR…YLHI), 114–134 (WNIG…GYVL), and 179–199 (FFAF…IHLL). Residues histidine 84 and histidine 98 each coordinate heme b. 2 residues coordinate heme b: histidine 183 and histidine 197. An a ubiquinone-binding site is contributed by histidine 202. The next 4 helical transmembrane spans lie at 227–247 (YKDL…ALFT), 289–309 (LGGV…PLLH), 321–341 (LTQI…WIGG), and 348–368 (FIMV…IIMP).

Belongs to the cytochrome b family. As to quaternary structure, the cytochrome bc1 complex contains 3 respiratory subunits (MT-CYB, CYC1 and UQCRFS1), 2 core proteins (UQCRC1 and UQCRC2) and probably 6 low-molecular weight proteins. Heme b is required as a cofactor.

Its subcellular location is the mitochondrion inner membrane. Its function is as follows. Component of the ubiquinol-cytochrome c reductase complex (complex III or cytochrome b-c1 complex) that is part of the mitochondrial respiratory chain. The b-c1 complex mediates electron transfer from ubiquinol to cytochrome c. Contributes to the generation of a proton gradient across the mitochondrial membrane that is then used for ATP synthesis. This Negaprion brevirostris (Lemon shark) protein is Cytochrome b (mt-cyb).